The primary structure comprises 162 residues: MEKIFERLMYASRWIMAPIYLGLSLVLLGLGIKFFQEIFHILPIIFEMTEVDLVLVTLSLIDITLVGGLIVMVMFSGYENFVSQLDVGEDSEKLSWLGKLDSGSLKNKVAASIVAISSIHLLKIFMDVKNIDNDKIMWYLLIHITFVVSAFAMGYLDKMTRK.

4 helical membrane-spanning segments follow: residues I15–F35, L53–V73, K108–V128, and I136–L156.

It belongs to the UPF0114 family.

Its subcellular location is the cell membrane. This Shewanella sp. (strain MR-4) protein is UPF0114 protein Shewmr4_0646.